The sequence spans 357 residues: GTPase Obg (357 aa).

The region spanning 1–159 is the Obg domain; sequence MKFVDEAEIQ…RTLKLELKLL (159 aa). The region spanning 160-343 is the OBG-type G domain; it reads ADIGMLGFPN…IMKSAMTLFE (184 aa). GTP-binding positions include 166–173, 191–195, 213–216, 293–296, and 324–326; these read GFPNVGKS, FTTLY, DVPG, NKAD, and SAV. Mg(2+) contacts are provided by Ser-173 and Thr-193.

Belongs to the TRAFAC class OBG-HflX-like GTPase superfamily. OBG GTPase family. Monomer. Mg(2+) is required as a cofactor.

Its subcellular location is the cytoplasm. Its function is as follows. An essential GTPase which binds GTP, GDP and possibly (p)ppGpp with moderate affinity, with high nucleotide exchange rates and a fairly low GTP hydrolysis rate. Plays a role in control of the cell cycle, stress response, ribosome biogenesis and in those bacteria that undergo differentiation, in morphogenesis control. The polypeptide is GTPase Obg (Xylella fastidiosa (strain 9a5c)).